Here is a 795-residue protein sequence, read N- to C-terminus: Delta-1-pyrroline-5-carboxylate synthase (795 aa).

Residues 1-361 (MLSQVYRCGF…FFSEVKPAGP (361 aa)) form a glutamate 5-kinase region. Residues S117, D223, and N246 each contribute to the substrate site. Residues 266 to 267 (SD) and 305 to 311 (MGGMEAK) each bind ATP. N6-succinyllysine occurs at positions 311, 347, and 550. A gamma-glutamyl phosphate reductase region spans residues 362–795 (TVEQQGEMAR…NLPIPQRNTN (434 aa)).

This sequence in the N-terminal section; belongs to the glutamate 5-kinase family. It in the C-terminal section; belongs to the gamma-glutamyl phosphate reductase family. Can form homodimers/multimers.

The protein resides in the mitochondrion. It localises to the mitochondrion matrix. The catalysed reaction is L-glutamate + ATP = L-glutamyl 5-phosphate + ADP. It carries out the reaction L-glutamate 5-semialdehyde + phosphate + NADP(+) = L-glutamyl 5-phosphate + NADPH + H(+). It functions in the pathway amino-acid biosynthesis; L-proline biosynthesis; L-glutamate 5-semialdehyde from L-glutamate: step 1/2. Its pathway is amino-acid biosynthesis; L-proline biosynthesis; L-glutamate 5-semialdehyde from L-glutamate: step 2/2. Its activity is regulated as follows. Isoform Short: Inhibited by L-ornithine with a Ki of approximately 0.25 mm. Isoform Long: Insensitive to ornithine inhibition. This is due to the two amino acid insert which abolishes feedback inhibition of P5CS activity by L-ornithine. Bifunctional enzyme that converts glutamate to glutamate 5-semialdehyde, an intermediate in the biosynthesis of proline, ornithine and arginine. The protein is Delta-1-pyrroline-5-carboxylate synthase (ALDH18A1) of Homo sapiens (Human).